The sequence spans 220 residues: 3-dehydroquinate dehydratase (220 aa).

Residues 29 to 31 (EFR) and R56 contribute to the 3-dehydroquinate site. Catalysis depends on H116, which acts as the Proton donor/acceptor. K142 functions as the Schiff-base intermediate with substrate in the catalytic mechanism. 3-dehydroquinate contacts are provided by R180, S200, and Q204.

Belongs to the type-I 3-dehydroquinase family. As to quaternary structure, homodimer.

The enzyme catalyses 3-dehydroquinate = 3-dehydroshikimate + H2O. It functions in the pathway metabolic intermediate biosynthesis; chorismate biosynthesis; chorismate from D-erythrose 4-phosphate and phosphoenolpyruvate: step 3/7. Involved in the third step of the chorismate pathway, which leads to the biosynthesis of aromatic amino acids. Catalyzes the cis-dehydration of 3-dehydroquinate (DHQ) and introduces the first double bond of the aromatic ring to yield 3-dehydroshikimate. This chain is 3-dehydroquinate dehydratase, found in Methanocaldococcus jannaschii (strain ATCC 43067 / DSM 2661 / JAL-1 / JCM 10045 / NBRC 100440) (Methanococcus jannaschii).